A 175-amino-acid chain; its full sequence is Granulocyte colony-stimulating factor (175 aa).

Disulfide bonds link C37/C43 and C65/C75. T134 carries O-linked (GalNAc...) threonine glycosylation.

The protein belongs to the IL-6 superfamily. In terms of assembly, monomer. O-glycosylated.

It localises to the secreted. In terms of biological role, granulocyte/macrophage colony-stimulating factors are cytokines that act in hematopoiesis by controlling the production, differentiation, and function of 2 related white cell populations of the blood, the granulocytes and the monocytes-macrophages. This CSF induces granulocytes. This is Granulocyte colony-stimulating factor (CSF3) from Canis lupus familiaris (Dog).